The chain runs to 441 residues: ATP-dependent protease ATPase subunit HslU (441 aa).

ATP contacts are provided by residues Ile18, 60-65 (GVGKTE), Asp254, Glu319, and Arg391.

Belongs to the ClpX chaperone family. HslU subfamily. In terms of assembly, a double ring-shaped homohexamer of HslV is capped on each side by a ring-shaped HslU homohexamer. The assembly of the HslU/HslV complex is dependent on binding of ATP.

The protein resides in the cytoplasm. Functionally, ATPase subunit of a proteasome-like degradation complex; this subunit has chaperone activity. The binding of ATP and its subsequent hydrolysis by HslU are essential for unfolding of protein substrates subsequently hydrolyzed by HslV. HslU recognizes the N-terminal part of its protein substrates and unfolds these before they are guided to HslV for hydrolysis. The chain is ATP-dependent protease ATPase subunit HslU from Shewanella sediminis (strain HAW-EB3).